Here is a 368-residue protein sequence, read N- to C-terminus: Peptide chain release factor 2 (368 aa).

Positions 36-56 are disordered; the sequence is EAQAGDPSLWDDPDHAQKVTS. The residue at position 250 (Q250) is an N5-methylglutamine.

This sequence belongs to the prokaryotic/mitochondrial release factor family. Methylated by PrmC. Methylation increases the termination efficiency of RF2.

The protein localises to the cytoplasm. Its function is as follows. Peptide chain release factor 2 directs the termination of translation in response to the peptide chain termination codons UGA and UAA. The chain is Peptide chain release factor 2 from Corynebacterium aurimucosum (strain ATCC 700975 / DSM 44827 / CIP 107346 / CN-1) (Corynebacterium nigricans).